The primary structure comprises 1121 residues: Transcription factor CSR2 (1121 aa).

3 positions are modified to phosphoserine: Ser-23, Ser-46, and Ser-127. 4 disordered regions span residues 273 to 342 (PLHT…RSLP), 513 to 532 (HTQLVASRPRSSSISSPQKL), 579 to 600 (LKRNNSNGRSDNNGASSSGLAM), and 837 to 860 (IPQDKNHNEVNDTNGNSNTSLQTS). A compositionally biased stretch (polar residues) spans 276 to 310 (TQRTSPSNTARTGNAMDTSNSDRASPASNNNTTDA). 3 stretches are compositionally biased toward low complexity: residues 318-329 (NNNPMNNNNSPA), 519-529 (SRPRSSSISSP), and 582-597 (NNSNGRSDNNGASSSG). Phosphoserine is present on Ser-327. Over residues 837–846 (IPQDKNHNEV) the composition is skewed to basic and acidic residues. Residue Lys-841 forms a Glycyl lysine isopeptide (Lys-Gly) (interchain with G-Cter in ubiquitin) linkage. A compositionally biased stretch (polar residues) spans 847-860 (NDTNGNSNTSLQTS). Ser-987 is subject to Phosphoserine. A compositionally biased stretch (polar residues) spans 999 to 1009 (KTTAVSDSSNG). Disordered stretches follow at residues 999 to 1022 (KTTAVSDSSNGAPIRDQQEQQARP) and 1075 to 1121 (TPRY…EISS). Over residues 1084–1093 (TNTDYNYNDN) the composition is skewed to low complexity.

The protein belongs to the CSR2 family. In terms of processing, phosphorylated by CDC28.

It is found in the cytoplasm. It localises to the nucleus. In terms of biological role, transcription factor involved in the regulation of fermentation and aerobic oxidation. Acts as a repressor of CYC1, which is involved in electron flow through the mitochondria under aerobic condition. Required for pseudohyphal formation upon nitrogen starvation. May be involved in viability at stationary phase and aging. In Saccharomyces cerevisiae (strain ATCC 204508 / S288c) (Baker's yeast), this protein is Transcription factor CSR2 (CSR2).